The chain runs to 793 residues: Probable alpha-fucosidase A (793 aa).

The N-terminal stretch at 1–20 (MLISGSSAALCALALPFAAA) is a signal peptide. Residues Asn-30, Asn-83, Asn-100, Asn-104, Asn-123, Asn-179, Asn-199, Asn-234, Asn-323, Asn-597, Asn-622, Asn-660, and Asn-757 are each glycosylated (N-linked (GlcNAc...) asparagine).

This sequence belongs to the glycosyl hydrolase 95 family.

It is found in the secreted. The enzyme catalyses an alpha-L-fucoside + H2O = L-fucose + an alcohol. Its function is as follows. Alpha-fucosidase involved in degradation of fucosylated xyloglucans. Hydrolyzes alpha-1,2-linked fucose. This Aspergillus niger (strain ATCC MYA-4892 / CBS 513.88 / FGSC A1513) protein is Probable alpha-fucosidase A (afcA).